A 392-amino-acid chain; its full sequence is Protein FAM53C (392 aa).

Met1 is subject to N-acetylmethionine. Positions 77 to 120 (HLRPPSRGSSPKEQPLSQVLRPEPPDPEKLPVPPAPPSKRHCRS) are disordered. A compositionally biased stretch (polar residues) spans 83–93 (RGSSPKEQPLS). Phosphoserine is present on residues Ser122 and Ser162. Disordered regions lie at residues 141 to 167 (LWTP…PKRV), 203 to 303 (SRPC…LDFD), and 340 to 364 (SASC…EGAV). Over residues 203–215 (SRPCATSPQSGSW) the composition is skewed to polar residues. A phosphoserine mark is found at Ser232, Ser234, Ser255, Ser273, and Ser299. Over residues 241–256 (ASRFLPSARSSPASSP) the composition is skewed to low complexity. The segment covering 278–303 (LDARKTGVKRRHEEDPRRLRPSLDFD) has biased composition (basic and acidic residues).

The protein belongs to the FAM53 family.

The protein is Protein FAM53C of Pongo abelii (Sumatran orangutan).